Here is a 223-residue protein sequence, read N- to C-terminus: F420-dependent NADP reductase (223 aa).

NADP(+) contacts are provided by residues 9–12 (TGDQ), 30–31 (SR), Lys35, Leu75, and Val101.

The protein belongs to the F420-dependent NADP reductase family.

It catalyses the reaction reduced coenzyme F420-(gamma-L-Glu)(n) + NADP(+) = oxidized coenzyme F420-(gamma-L-Glu)(n) + NADPH + 2 H(+). In terms of biological role, catalyzes the reduction of NADP(+) with F420H(2) via hydride transfer, and the reverse reaction, i.e. the reduction of F420 with NADPH. Probably functions in the regeneration of NADPH required in biosynthetic reactions. The chain is F420-dependent NADP reductase (fno) from Methanocaldococcus jannaschii (strain ATCC 43067 / DSM 2661 / JAL-1 / JCM 10045 / NBRC 100440) (Methanococcus jannaschii).